Consider the following 74-residue polypeptide: Small ribosomal subunit protein bS18 (74 aa).

It belongs to the bacterial ribosomal protein bS18 family. As to quaternary structure, part of the 30S ribosomal subunit. Forms a tight heterodimer with protein bS6.

Its function is as follows. Binds as a heterodimer with protein bS6 to the central domain of the 16S rRNA, where it helps stabilize the platform of the 30S subunit. This chain is Small ribosomal subunit protein bS18, found in Sphingopyxis alaskensis (strain DSM 13593 / LMG 18877 / RB2256) (Sphingomonas alaskensis).